A 507-amino-acid polypeptide reads, in one-letter code: Glucose-6-phosphate isomerase (507 aa).

Catalysis depends on E337, which acts as the Proton donor. Residues H368 and K478 contribute to the active site.

This sequence belongs to the GPI family.

Its subcellular location is the cytoplasm. It carries out the reaction alpha-D-glucose 6-phosphate = beta-D-fructose 6-phosphate. It participates in carbohydrate biosynthesis; gluconeogenesis. Its pathway is carbohydrate degradation; glycolysis; D-glyceraldehyde 3-phosphate and glycerone phosphate from D-glucose: step 2/4. Functionally, catalyzes the reversible isomerization of glucose-6-phosphate to fructose-6-phosphate. The protein is Glucose-6-phosphate isomerase of Novosphingobium aromaticivorans (strain ATCC 700278 / DSM 12444 / CCUG 56034 / CIP 105152 / NBRC 16084 / F199).